We begin with the raw amino-acid sequence, 162 residues long: Nucleotide-binding protein A2cp1_0112 (162 aa).

This sequence belongs to the YajQ family.

Its function is as follows. Nucleotide-binding protein. The chain is Nucleotide-binding protein A2cp1_0112 from Anaeromyxobacter dehalogenans (strain 2CP-1 / ATCC BAA-258).